Here is a 153-residue protein sequence, read N- to C-terminus: Cornifin-B (153 aa).

Disordered stretches follow at residues 1–35 (MSSHQQKQPCTAPPQLHEQQVKQPCQPPPPEPCVS) and 49–85 (CHPKAPEPCHPKAPEPCHPKAPEPCHPKAPEPCHPKA). A run of 14 repeats spans residues 27-34 (PPPPEPCV), 35-42 (SQVKTPCD), 43-50 (TKVPEPCH), 51-58 (PKAPEPCH), 59-66 (PKAPEPCH), 67-74 (PKAPEPCH), 75-82 (PKAPEPCH), 83-90 (PKAPEPCH), 91-98 (PKAPEPCH), 99-106 (PKAPEPCH), 107-114 (PKAPEPCH), 115-122 (PKVPEPCL), 123-130 (PKAPEPCQ), and 131-138 (PIVPEPCP). The 14 X 8 AA approximate tandem repeats stretch occupies residues 27–138 (PPPPEPCVSQ…CQPIVPEPCP (112 aa)).

Belongs to the cornifin (SPRR) family. Expressed in fetal periderm, hair follicles and in the thickened epidermis of the lip and footpad. Also present in the epithelia of various tissues such as the penis, vagina, forestomach, tongue and esophagus.

It localises to the cytoplasm. Its function is as follows. Cross-linked envelope protein of keratinocytes. It is a keratinocyte protein that first appears in the cell cytosol, but ultimately becomes cross-linked to membrane proteins by transglutaminase. All that results in the formation of an insoluble envelope beneath the plasma membrane. The chain is Cornifin-B (Sprr1b) from Mus musculus (Mouse).